Here is a 396-residue protein sequence, read N- to C-terminus: Flavohemoprotein (396 aa).

The Globin domain maps to 1 to 136 (MLDAQTIATV…LANVFIHREA (136 aa)). His-85 is a binding site for heme b. Active-site charge relay system residues include Tyr-95 and Glu-135. Residues 147 to 396 (GGWEGTRPFR…YECFGPHKVL (250 aa)) are reductase. Residues 150-255 (EGTRPFRIVA…AAPAGDFFMN (106 aa)) form the FAD-binding FR-type domain. FAD contacts are provided by residues Tyr-188 and 204 to 207 (RQYS). 268 to 273 (GVGQTP) is an NADP(+) binding site. Residue 389–392 (CFGP) coordinates FAD.

This sequence belongs to the globin family. Two-domain flavohemoproteins subfamily. The protein in the C-terminal section; belongs to the flavoprotein pyridine nucleotide cytochrome reductase family. The cofactor is heme b. FAD serves as cofactor.

It carries out the reaction 2 nitric oxide + NADPH + 2 O2 = 2 nitrate + NADP(+) + H(+). The catalysed reaction is 2 nitric oxide + NADH + 2 O2 = 2 nitrate + NAD(+) + H(+). Is involved in NO detoxification in an aerobic process, termed nitric oxide dioxygenase (NOD) reaction that utilizes O(2) and NAD(P)H to convert NO to nitrate, which protects the bacterium from various noxious nitrogen compounds. Therefore, plays a central role in the inducible response to nitrosative stress. The protein is Flavohemoprotein of Salmonella typhi.